The chain runs to 1953 residues: TATA-binding protein-associated factor mot1 (1953 aa).

An HEAT 1 repeat occupies 36-74 (PDELYNLLGRVVPYLKSKNWDTRVAAAKAIGGIVENVPV). A disordered region spans residues 79–141 (RTSPVKKEET…KLEEERLSTR (63 aa)). Over residues 98–108 (TEEKPFIKTEE) the composition is skewed to basic and acidic residues. Over residues 113–130 (SSQSQVVVSSNLTSNSEV) the composition is skewed to low complexity. The span at 131–141 (SKLEEERLSTR) shows a compositional bias: basic and acidic residues. Position 144 is a phosphoserine (serine 144). A disordered region spans residues 240-278 (DNVGSNSKGSPTTSIPEHKTSINNNKPEDTPTPSENVHL). The segment covering 242-276 (VGSNSKGSPTTSIPEHKTSINNNKPEDTPTPSENV) has biased composition (polar residues). 4 HEAT repeats span residues 358 to 396 (VWPF…YAGF), 513 to 551 (SDYL…KLVQ), 554 to 592 (LSSC…LCSF), and 608 to 646 (EFSF…VQTS). Disordered stretches follow at residues 730 to 762 (SGQP…KDDP) and 1078 to 1103 (DDND…KSSL). 2 HEAT repeats span residues 1191 to 1229 (QSEI…SNAA) and 1270 to 1311 (VRIL…LVPL). The region spanning 1370–1543 (AFLNKYELHG…WSLFDFLMPG (174 aa)) is the Helicase ATP-binding domain. An ATP-binding site is contributed by 1383 to 1390 (DDMGLGKT). Positions 1494-1497 (DEGH) match the DEGH box motif. The HEAT 8 repeat unit spans residues 1580–1623 (EAIHKQVLPFMLRRLKEDVLADLPPKIIQDYYCDMSDLQRKLLN). A Helicase C-terminal domain is found at 1725 to 1877 (GIDSALTNAV…STVVNQQNAG (153 aa)). The tract at residues 1901–1920 (QNIDKEESEDAAGRGLSGTS) is disordered.

The protein belongs to the SNF2/RAD54 helicase family. Forms a complex with TBP which binds TATA DNA.

Its subcellular location is the nucleus. Regulates transcription in association with TATA binding protein (TBP). Removes TBP from the TATA box via its ATPase activity. This chain is TATA-binding protein-associated factor mot1, found in Schizosaccharomyces pombe (strain 972 / ATCC 24843) (Fission yeast).